We begin with the raw amino-acid sequence, 130 residues long: Small ribosomal subunit protein uS9 (130 aa).

The protein belongs to the universal ribosomal protein uS9 family.

The sequence is that of Small ribosomal subunit protein uS9 from Hahella chejuensis (strain KCTC 2396).